The chain runs to 208 residues: ATP synthase subunit b (208 aa).

A compositionally biased stretch (polar residues) spans 1 to 18; sequence MFVSTAFAQTATESQPAS. The interval 1–26 is disordered; that stretch reads MFVSTAFAQTATESQPASTAGEHGAA. Residues 56-78 traverse the membrane as a helical segment; the sequence is SQVLWLAITFGLFYLFLSRVVLP.

This sequence belongs to the ATPase B chain family. In terms of assembly, F-type ATPases have 2 components, F(1) - the catalytic core - and F(0) - the membrane proton channel. F(1) has five subunits: alpha(3), beta(3), gamma(1), delta(1), epsilon(1). F(0) has three main subunits: a(1), b(2) and c(10-14). The alpha and beta chains form an alternating ring which encloses part of the gamma chain. F(1) is attached to F(0) by a central stalk formed by the gamma and epsilon chains, while a peripheral stalk is formed by the delta and b chains.

The protein resides in the cell inner membrane. F(1)F(0) ATP synthase produces ATP from ADP in the presence of a proton or sodium gradient. F-type ATPases consist of two structural domains, F(1) containing the extramembraneous catalytic core and F(0) containing the membrane proton channel, linked together by a central stalk and a peripheral stalk. During catalysis, ATP synthesis in the catalytic domain of F(1) is coupled via a rotary mechanism of the central stalk subunits to proton translocation. In terms of biological role, component of the F(0) channel, it forms part of the peripheral stalk, linking F(1) to F(0). The chain is ATP synthase subunit b from Brucella melitensis biotype 1 (strain ATCC 23456 / CCUG 17765 / NCTC 10094 / 16M).